We begin with the raw amino-acid sequence, 162 residues long: NADH-quinone oxidoreductase subunit I (162 aa).

2 4Fe-4S ferredoxin-type domains span residues 54–83 and 93–122; these read RRYE…INST and SSYE…ETNI. Residues Cys-63, Cys-66, Cys-69, Cys-73, Cys-102, Cys-105, Cys-108, and Cys-112 each coordinate [4Fe-4S] cluster.

Belongs to the complex I 23 kDa subunit family. As to quaternary structure, NDH-1 is composed of 14 different subunits. Subunits NuoA, H, J, K, L, M, N constitute the membrane sector of the complex. [4Fe-4S] cluster is required as a cofactor.

Its subcellular location is the cell inner membrane. The catalysed reaction is a quinone + NADH + 5 H(+)(in) = a quinol + NAD(+) + 4 H(+)(out). In terms of biological role, NDH-1 shuttles electrons from NADH, via FMN and iron-sulfur (Fe-S) centers, to quinones in the respiratory chain. The immediate electron acceptor for the enzyme in this species is believed to be ubiquinone. Couples the redox reaction to proton translocation (for every two electrons transferred, four hydrogen ions are translocated across the cytoplasmic membrane), and thus conserves the redox energy in a proton gradient. The chain is NADH-quinone oxidoreductase subunit I from Francisella tularensis subsp. tularensis (strain FSC 198).